The sequence spans 182 residues: Transmembrane and coiled-coil domain-containing protein 2 (182 aa).

A helical membrane pass occupies residues 51 to 71 (VQIILRISFLILLGIGIYALW). The stretch at 124-151 (GLQEKILKKLKTVENKMKNLEGIIVAQK) forms a coiled coil.

The protein localises to the membrane. The sequence is that of Transmembrane and coiled-coil domain-containing protein 2 (TMCO2) from Homo sapiens (Human).